We begin with the raw amino-acid sequence, 540 residues long: Membrane protein insertase YidC (540 aa).

A run of 5 helical transmembrane segments spans residues 1 to 21 (MVVQNNFLFIAFIFVTFMMLD), 351 to 371 (NWGISIIIITFMVRGIMFPLT), 418 to 438 (LGGCMPLIIQMPIFLALYYML), 464 to 484 (ILPIIMGITMFLIQKISPSSI), and 497 to 517 (PLIFTIFFLWFPSGLVLYYII).

It belongs to the OXA1/ALB3/YidC family. Type 1 subfamily. In terms of assembly, interacts with the Sec translocase complex via SecD. Specifically interacts with transmembrane segments of nascent integral membrane proteins during membrane integration.

The protein resides in the cell membrane. Its function is as follows. Required for the insertion and/or proper folding and/or complex formation of integral membrane proteins into the membrane. Involved in integration of membrane proteins that insert both dependently and independently of the Sec translocase complex, as well as at least some lipoproteins. Aids folding of multispanning membrane proteins. This Wigglesworthia glossinidia brevipalpis protein is Membrane protein insertase YidC.